We begin with the raw amino-acid sequence, 115 residues long: Peptidyl-tRNA hydrolase (115 aa).

This sequence belongs to the PTH2 family.

The protein resides in the cytoplasm. It carries out the reaction an N-acyl-L-alpha-aminoacyl-tRNA + H2O = an N-acyl-L-amino acid + a tRNA + H(+). The natural substrate for this enzyme may be peptidyl-tRNAs which drop off the ribosome during protein synthesis. The chain is Peptidyl-tRNA hydrolase from Archaeoglobus fulgidus (strain ATCC 49558 / DSM 4304 / JCM 9628 / NBRC 100126 / VC-16).